The primary structure comprises 126 residues: Small ribosomal subunit protein uS13 (126 aa).

Residues 91–126 (HRAGLPVRGQRTRTNSRTRRSAKRTVAGKKKAPSKK) form a disordered region. The segment covering 100–126 (QRTRTNSRTRRSAKRTVAGKKKAPSKK) has biased composition (basic residues).

The protein belongs to the universal ribosomal protein uS13 family. As to quaternary structure, part of the 30S ribosomal subunit. Forms a loose heterodimer with protein S19. Forms two bridges to the 50S subunit in the 70S ribosome.

Functionally, located at the top of the head of the 30S subunit, it contacts several helices of the 16S rRNA. In the 70S ribosome it contacts the 23S rRNA (bridge B1a) and protein L5 of the 50S subunit (bridge B1b), connecting the 2 subunits; these bridges are implicated in subunit movement. Contacts the tRNAs in the A and P-sites. This Acaryochloris marina (strain MBIC 11017) protein is Small ribosomal subunit protein uS13.